Consider the following 71-residue polypeptide: Sec-independent protein translocase protein TatA (71 aa).

A helical membrane pass occupies residues Met1–Gly21. Over residues Lys41–Ser57 the composition is skewed to basic and acidic residues. The disordered stretch occupies residues Lys41–Val71. Polar residues predominate over residues Glu58–Val71.

This sequence belongs to the TatA/E family. The Tat system comprises two distinct complexes: a TatABC complex, containing multiple copies of TatA, TatB and TatC subunits, and a separate TatA complex, containing only TatA subunits. Substrates initially bind to the TatABC complex, which probably triggers association of the separate TatA complex to form the active translocon.

The protein localises to the cell inner membrane. Functionally, part of the twin-arginine translocation (Tat) system that transports large folded proteins containing a characteristic twin-arginine motif in their signal peptide across membranes. TatA could form the protein-conducting channel of the Tat system. The sequence is that of Sec-independent protein translocase protein TatA from Campylobacter fetus subsp. fetus (strain 82-40).